Consider the following 1147-residue polypeptide: Sterol regulatory element-binding protein 1 (1147 aa).

The tract at residues 1-60 (MDEPPFSEAALEQALGEPCDLDAALLTDIEDMLQLINNQDSDFPGLFDPPYAGSGAGGTD) is transcriptional activation (acidic). The Cytoplasmic segment spans residues 1–487 (MDEPPFSEAA…HSRGMLDRSR (487 aa)). The 9aaTAD signature appears at 27–35 (TDIEDMLQL). Residues 39-193 (QDSDFPGLFD…PLPGLPLASP (155 aa)) form a disordered region. 2 stretches are compositionally biased toward low complexity: residues 62 to 71 (ASPDTSSPGS) and 78 to 95 (TLSS…AAPS). Over residues 96–105 (PLSPPQPAPT) the composition is skewed to pro residues. Phosphoserine is present on residues serine 98 and serine 117. Positions 170–190 (GGFSTGSPPGNTQQPLPGLPL) are enriched in low complexity. Residues 234 to 497 (QQVPVLLQPH…LALCTLVFLC (264 aa)) are interaction with LMNA. Positions 323-373 (EKRTAHNAIEKRYRSSINDKIIELKDLVVGTEAKLNKSAVLRKAIDYIRFL) constitute a bHLH domain. Serine 337 and serine 338 each carry phosphoserine; by SIK1. The interval 373 to 394 (LQHSNQKLKQENLSLRTAVHKS) is leucine-zipper. Position 396 is a phosphoserine; by AMPK (serine 396). At serine 402 the chain carries Phosphoserine; by SIK1. The tract at residues 421-479 (VEDTLTPPPSDAGSPFQSSPLSLGSRGSGSGGSGSDSEPDSPVFEDSKAKPEQRPSLHS) is disordered. Serine 457 is modified (phosphoserine). Residues 465 to 479 (EDSKAKPEQRPSLHS) are compositionally biased toward basic and acidic residues. The helical transmembrane segment at 488–508 (LALCTLVFLCLSCNPLASLLG) threads the bilayer. Topologically, residues 509–547 (ARGLPSPSDTTSVYHSPGRNVLGTESRDGPGWAQWLLPP) are lumenal. Residues 548 to 568 (VVWLLNGLLVLVSLVLLFVYG) traverse the membrane as a helical segment. At 569-1147 (EPVTRPHSGP…LGGGTTVTSS (579 aa)) the chain is on the cytoplasmic side. Serine 1060 carries the post-translational modification Phosphoserine.

This sequence belongs to the SREBP family. Forms a tight complex with SCAP, the SCAP-SREBP complex, in the endoplasmic reticulum membrane and the Golgi apparatus. Interacts with PAQR3; the interaction anchors the SCAP-SREBP complex to the Golgi apparatus in low cholesterol conditions. As to quaternary structure, efficient DNA binding of the soluble transcription factor fragment requires dimerization with another bHLH protein. Interacts with CEBPA, the interaction produces a transcriptional synergy. Interacts with LMNA. Post-translationally, processed in the Golgi apparatus, releasing the protein from the membrane. At low cholesterol the SCAP-SREBP complex is recruited into COPII vesicles for export from the endoplasmic reticulum. In the Golgi, complex SREBPs are cleaved sequentially by site-1 (MBTPS1, S1P) and site-2 (MBTPS2, S2P) protease. The first cleavage by site-1 protease occurs within the luminal loop, the second cleavage by site-2 protease occurs within the first transmembrane domain, releasing the transcription factor from the Golgi membrane. In terms of processing, phosphorylated by AMPK, leading to suppress protein processing and nuclear translocation, and repress target gene expression. Phosphorylation at Ser-402 by SIK1 represses activity possibly by inhibiting DNA-binding. SCAP-free SREBF1 is ubiquitinated by the BCR(ARMC5) complex, leading to its degradation. Post-translationally, ubiquitinated; the nuclear form has a rapid turnover and is rapidly ubiquitinated and degraded by the proteasome in the nucleus. Expressed in a wide variety of tissues, most abundant in liver and adrenal gland. In fetal tissues lung and liver shows highest expression. In terms of tissue distribution, predominates in hepatoma cell lines. Also expressed in kidney, brain, white fat, and muscle. As to expression, predominantly expressed in liver and adipose tissues. Also expressed in kidney, brain, white fat, and muscle.

It is found in the endoplasmic reticulum membrane. The protein resides in the golgi apparatus membrane. The protein localises to the cytoplasmic vesicle. Its subcellular location is the COPII-coated vesicle membrane. It localises to the nucleus. Its activity is regulated as follows. Activation by cleavage is down-regulated upon activation of SIRT3-dependent PRKAA1/AMPK-alpha signaling cascade which leads to inhibition of ATP-consuming lipogenesis to restore cellular energy balance. Its function is as follows. Precursor of the transcription factor form (Processed sterol regulatory element-binding protein 1), which is embedded in the endoplasmic reticulum membrane. Low sterol concentrations promote processing of this form, releasing the transcription factor form that translocates into the nucleus and activates transcription of genes involved in cholesterol biosynthesis and lipid homeostasis. In terms of biological role, key transcription factor that regulates expression of genes involved in cholesterol biosynthesis and lipid homeostasis. Binds to the sterol regulatory element 1 (SRE-1) (5'-ATCACCCCAC-3'). Has dual sequence specificity binding to both an E-box motif (5'-ATCACGTGA-3') and to SRE-1 (5'-ATCACCCCAC-3'). Regulates the promoters of genes involved in cholesterol biosynthesis and the LDL receptor (LDLR) pathway of sterol regulation. Functionally, isoform expressed only in select tissues, which has higher transcriptional activity compared to SREBP-1C. Able to stimulate both lipogenic and cholesterogenic gene expression. Has a role in the nutritional regulation of fatty acids and triglycerides in lipogenic organs such as the liver. Required for innate immune response in macrophages by regulating lipid metabolism. Predominant isoform expressed in most tissues, which has weaker transcriptional activity compared to isoform SREBP-1A. Primarily controls expression of lipogenic gene. Strongly activates global lipid synthesis in rapidly growing cells. Its function is as follows. The absence of Golgi proteolytic processing requirement makes this isoform constitutively active in transactivation of lipogenic gene promoters. This chain is Sterol regulatory element-binding protein 1, found in Homo sapiens (Human).